The sequence spans 229 residues: Large ribosomal subunit protein uL1 (229 aa).

The protein belongs to the universal ribosomal protein uL1 family. As to quaternary structure, part of the 50S ribosomal subunit.

In terms of biological role, binds directly to 23S rRNA. The L1 stalk is quite mobile in the ribosome, and is involved in E site tRNA release. Protein L1 is also a translational repressor protein, it controls the translation of the L11 operon by binding to its mRNA. The sequence is that of Large ribosomal subunit protein uL1 from Streptococcus agalactiae serotype Ia (strain ATCC 27591 / A909 / CDC SS700).